The sequence spans 319 residues: 4-hydroxy-3-methylbut-2-enyl diphosphate reductase (319 aa).

Cys15 contacts [4Fe-4S] cluster. 2 residues coordinate (2E)-4-hydroxy-3-methylbut-2-enyl diphosphate: His44 and His77. Dimethylallyl diphosphate-binding residues include His44 and His77. His44 and His77 together coordinate isopentenyl diphosphate. A [4Fe-4S] cluster-binding site is contributed by Cys99. His127 is a binding site for (2E)-4-hydroxy-3-methylbut-2-enyl diphosphate. Dimethylallyl diphosphate is bound at residue His127. Residue His127 coordinates isopentenyl diphosphate. Glu129 serves as the catalytic Proton donor. (2E)-4-hydroxy-3-methylbut-2-enyl diphosphate is bound at residue Thr167. Cys197 provides a ligand contact to [4Fe-4S] cluster. Residues Ser225, Ser226, Asn227, and Ser269 each coordinate (2E)-4-hydroxy-3-methylbut-2-enyl diphosphate. Ser225, Ser226, Asn227, and Ser269 together coordinate dimethylallyl diphosphate. The isopentenyl diphosphate site is built by Ser225, Ser226, Asn227, and Ser269.

The protein belongs to the IspH family. It depends on [4Fe-4S] cluster as a cofactor.

The catalysed reaction is isopentenyl diphosphate + 2 oxidized [2Fe-2S]-[ferredoxin] + H2O = (2E)-4-hydroxy-3-methylbut-2-enyl diphosphate + 2 reduced [2Fe-2S]-[ferredoxin] + 2 H(+). It catalyses the reaction dimethylallyl diphosphate + 2 oxidized [2Fe-2S]-[ferredoxin] + H2O = (2E)-4-hydroxy-3-methylbut-2-enyl diphosphate + 2 reduced [2Fe-2S]-[ferredoxin] + 2 H(+). Its pathway is isoprenoid biosynthesis; dimethylallyl diphosphate biosynthesis; dimethylallyl diphosphate from (2E)-4-hydroxy-3-methylbutenyl diphosphate: step 1/1. It functions in the pathway isoprenoid biosynthesis; isopentenyl diphosphate biosynthesis via DXP pathway; isopentenyl diphosphate from 1-deoxy-D-xylulose 5-phosphate: step 6/6. Functionally, catalyzes the conversion of 1-hydroxy-2-methyl-2-(E)-butenyl 4-diphosphate (HMBPP) into a mixture of isopentenyl diphosphate (IPP) and dimethylallyl diphosphate (DMAPP). Acts in the terminal step of the DOXP/MEP pathway for isoprenoid precursor biosynthesis. This Rhodopirellula baltica (strain DSM 10527 / NCIMB 13988 / SH1) protein is 4-hydroxy-3-methylbut-2-enyl diphosphate reductase.